The primary structure comprises 271 residues: MASAGSLDVPERGHQRPFLIGVSGGTASGKSTVCEKIMELLGQNEVDHRQRKVVILSQDRFYKVLTPEQKTRALKGQYNFDHPDAFDNELMHRTLTQILEGQIVDVPMYDFITHSRLPETTTVYPADVLLFEGILAFYNQEIRDMFQLKLFVDTDSDVRLSRRVLRDMKRGRDLEQILTQYTTFVKPAFEEFSLPTKKYADVIIPRGVDNMVAINLIVQHIQDILNGDICKWQRGVLNGRSQKRTFPGQGESGGLILPGKRTHLESSSRPH.

24 to 32 (GGTASGKST) lines the ATP pocket. Substrate-binding residues include Asp81, Tyr109, His114, Arg163, Arg172, and Gln180. Position 209 (Asp209) interacts with ATP. Residues 241–271 (SQKRTFPGQGESGGLILPGKRTHLESSSRPH) form a disordered region. The span at 262–271 (THLESSSRPH) shows a compositional bias: basic and acidic residues.

This sequence belongs to the uridine kinase family.

It carries out the reaction uridine + ATP = UMP + ADP + H(+). The enzyme catalyses cytidine + ATP = CMP + ADP + H(+). It participates in pyrimidine metabolism; CTP biosynthesis via salvage pathway; CTP from cytidine: step 1/3. Its pathway is pyrimidine metabolism; UMP biosynthesis via salvage pathway; UMP from uridine: step 1/1. Functionally, phosphorylates uridine and cytidine to uridine monophosphate and cytidine monophosphate. Does not phosphorylate deoxyribonucleosides or purine ribonucleosides. Can use ATP or GTP as a phosphate donor. The chain is Uridine-cytidine kinase 1-A (uck1-a) from Xenopus laevis (African clawed frog).